The sequence spans 699 residues: Tectonic-like complex member Mks1 (699 aa).

2 disordered regions span residues 101–121 (RRSP…EGEI) and 373–396 (DGFS…IEED). Basic and acidic residues predominate over residues 108–119 (HEGEMEKDKNEG). The C2 B9-type domain maps to 434-560 (KRVSLLLELQ…RLQCIRPLGN (127 aa)). The segment at 632–661 (LELGNDSSDDGDSNDDDVRSSSNPDTSRAT) is disordered.

As to quaternary structure, probable component of the tectonic-like complex (also named MKS complex), composed of B9d1, B9d2, Cc2d2a, Mks1 and tctn. As to expression, expressed in chordotonal neurons in the antennae (at protein level). Expressed in spermatids (at protein level).

The protein resides in the cytoplasm. It is found in the cytoskeleton. It localises to the cilium basal body. The protein localises to the microtubule organizing center. Its subcellular location is the centrosome. The protein resides in the centriole. In terms of biological role, probable component of the tectonic-like complex (also named MKS complex), a complex localized at the transition zone of primary cilia. Required for ciliary structure and function. The chain is Tectonic-like complex member Mks1 from Drosophila melanogaster (Fruit fly).